We begin with the raw amino-acid sequence, 1548 residues long: Dual oxidase 2 (1548 aa).

The first 25 residues, 1-25 (MLRARPEALMLLGALLTGSLGPSGN), serve as a signal peptide directing secretion. At 26–601 (QDALSLPWEV…EGSSPGFAIT (576 aa)) the chain is on the extracellular side. The segment at 30–596 (SLPWEVQRYD…VLDFFEGSSP (567 aa)) is peroxidase-like; mediates peroxidase activity. 5 N-linked (GlcNAc...) asparagine glycosylation sites follow: asparagine 100, asparagine 348, asparagine 382, asparagine 455, and asparagine 537. Cysteine 124 and cysteine 1162 are disulfide-bonded. Residues 602-622 (IIALCCLPLVSLLLSGVVAYF) traverse the membrane as a helical segment. The Cytoplasmic portion of the chain corresponds to 623 to 1041 (RGREHKKLQK…KRFVENYRRH (419 aa)). EF-hand domains are found at residues 819 to 854 (PQDM…FMKG), 855 to 890 (SPED…FIEI), and 899 to 934 (QLAE…HDSE). Residues aspartate 832, aspartate 834, asparagine 836, tyrosine 838, glutamate 843, aspartate 868, aspartate 870, asparagine 872, and glutamate 879 each contribute to the Ca(2+) site. Residues 960 to 1245 (ISCRVSFITR…GSYALIQLPT (286 aa)) are interaction with TXNDC11. The interval 971–991 (PGERSHPQGLGPPAPEAPELG) is disordered. Residues 1042–1062 (IVCVAIFSAICVGVFADRAYY) traverse the membrane as a helical segment. Residues 1063–1076 (YGFASPPSDIAQTT) are Extracellular-facing. The chain crosses the membrane as a helical span at residues 1077–1097 (LVGIILSRGTAASVSFMFSYI). One can recognise a Ferric oxidoreductase domain in the interval 1084 to 1266 (RGTAASVSFM…YGGDKLVSLS (183 aa)). Over 1098–1128 (LLTMCRNLITFLRETFLNRYVPFDAAVDFHR) the chain is Cytoplasmic. The chain crosses the membrane as a helical span at residues 1129–1151 (WIAMAAVVLAILHSAGHAVNVYI). Residues 1152 to 1185 (FSVSPLSLLACIFPNVFVNDGSKLPQKFYWWFFQ) are Extracellular-facing. A helical transmembrane segment spans residues 1186–1206 (TVPGMTGVLLLLVLAIMYVFA). The Cytoplasmic segment spans residues 1207-1223 (SHHFRRRSFRGFWLTHH). The next 2 membrane-spanning stretches (helical) occupy residues 1224 to 1244 (LYIL…IQLP) and 1245 to 1265 (TFHI…LVSL). The Cytoplasmic segment spans residues 1266-1548 (SRKKVEISVV…AHFMHHYENF (283 aa)). The FAD-binding FR-type domain maps to 1267-1373 (RKKVEISVVK…DGPFGEGHQE (107 aa)).

It in the N-terminal section; belongs to the peroxidase family. As to quaternary structure, heterodimer with DUOXA2; disulfide-linked. Interacts with TXNDC11, TPO and CYBA. N-glycosylated. Expressed in colon, small intestine, duodenum and tracheal surface epithelial cells (at protein level). Expressed in thyrocytes. Also detected in kidney, liver, lung, pancreas, prostate, salivary glands, rectum and testis.

Its subcellular location is the apical cell membrane. The protein resides in the cell junction. It catalyses the reaction NADH + O2 + H(+) = H2O2 + NAD(+). The enzyme catalyses NADPH + O2 + H(+) = H2O2 + NADP(+). The protein operates within hormone biosynthesis; thyroid hormone biosynthesis. Its activity is regulated as follows. Peroxidase activity is inhibited by aminobenzohydrazide. The NADPH oxidase activity is calcium-dependent. In terms of biological role, generates hydrogen peroxide which is required for the activity of thyroid peroxidase/TPO and lactoperoxidase/LPO. Plays a role in thyroid hormones synthesis and lactoperoxidase-mediated antimicrobial defense at the surface of mucosa. May have its own peroxidase activity through its N-terminal peroxidase-like domain. The chain is Dual oxidase 2 (DUOX2) from Homo sapiens (Human).